Reading from the N-terminus, the 222-residue chain is uncharacterized protein (222 aa).

This is an uncharacterized protein from Pyrococcus woesei.